A 452-amino-acid polypeptide reads, in one-letter code: Bifunctional protein GlmU (452 aa).

Positions 1 to 226 are pyrophosphorylase; that stretch reads MNFSAVILAA…PIEVEGVNDR (226 aa). Residues 8-11, K22, Q73, 78-79, 100-102, G137, E151, N166, and N224 contribute to the UDP-N-acetyl-alpha-D-glucosamine site; these read LAAG, GT, and YGD. Mg(2+) is bound at residue D102. N224 contacts Mg(2+). The linker stretch occupies residues 227–247; that stretch reads AQLARLERAYQAAQAQKLLEQ. The segment at 248–452 is N-acetyltransferase; sequence GVMLRDPSRF…IANWQRPTKK (205 aa). Residues R330 and K348 each contribute to the UDP-N-acetyl-alpha-D-glucosamine site. The active-site Proton acceptor is H360. Positions 363 and 374 each coordinate UDP-N-acetyl-alpha-D-glucosamine. Residues A377, 383-384, S402, A420, and R437 contribute to the acetyl-CoA site; that span reads NY.

This sequence in the N-terminal section; belongs to the N-acetylglucosamine-1-phosphate uridyltransferase family. The protein in the C-terminal section; belongs to the transferase hexapeptide repeat family. Homotrimer. Mg(2+) serves as cofactor.

The protein resides in the cytoplasm. The catalysed reaction is alpha-D-glucosamine 1-phosphate + acetyl-CoA = N-acetyl-alpha-D-glucosamine 1-phosphate + CoA + H(+). It catalyses the reaction N-acetyl-alpha-D-glucosamine 1-phosphate + UTP + H(+) = UDP-N-acetyl-alpha-D-glucosamine + diphosphate. The protein operates within nucleotide-sugar biosynthesis; UDP-N-acetyl-alpha-D-glucosamine biosynthesis; N-acetyl-alpha-D-glucosamine 1-phosphate from alpha-D-glucosamine 6-phosphate (route II): step 2/2. It participates in nucleotide-sugar biosynthesis; UDP-N-acetyl-alpha-D-glucosamine biosynthesis; UDP-N-acetyl-alpha-D-glucosamine from N-acetyl-alpha-D-glucosamine 1-phosphate: step 1/1. It functions in the pathway bacterial outer membrane biogenesis; LPS lipid A biosynthesis. Functionally, catalyzes the last two sequential reactions in the de novo biosynthetic pathway for UDP-N-acetylglucosamine (UDP-GlcNAc). The C-terminal domain catalyzes the transfer of acetyl group from acetyl coenzyme A to glucosamine-1-phosphate (GlcN-1-P) to produce N-acetylglucosamine-1-phosphate (GlcNAc-1-P), which is converted into UDP-GlcNAc by the transfer of uridine 5-monophosphate (from uridine 5-triphosphate), a reaction catalyzed by the N-terminal domain. The polypeptide is Bifunctional protein GlmU (Aliivibrio fischeri (strain MJ11) (Vibrio fischeri)).